A 339-amino-acid chain; its full sequence is Anthranilate phosphoribosyltransferase (339 aa).

Residues Gly-80, 83–84 (GD), 90–93 (NVST), 108–116 (KHGNRSVTS), and Ser-120 each bind 5-phospho-alpha-D-ribose 1-diphosphate. Gly-80 contacts anthranilate. Ser-92 is a binding site for Mg(2+). Asn-111 serves as a coordination point for anthranilate. Residue Arg-166 coordinates anthranilate. Positions 225 and 226 each coordinate Mg(2+).

The protein belongs to the anthranilate phosphoribosyltransferase family. In terms of assembly, homodimer. The cofactor is Mg(2+).

It carries out the reaction N-(5-phospho-beta-D-ribosyl)anthranilate + diphosphate = 5-phospho-alpha-D-ribose 1-diphosphate + anthranilate. It participates in amino-acid biosynthesis; L-tryptophan biosynthesis; L-tryptophan from chorismate: step 2/5. Functionally, catalyzes the transfer of the phosphoribosyl group of 5-phosphorylribose-1-pyrophosphate (PRPP) to anthranilate to yield N-(5'-phosphoribosyl)-anthranilate (PRA). This is Anthranilate phosphoribosyltransferase from Ignicoccus hospitalis (strain KIN4/I / DSM 18386 / JCM 14125).